The sequence spans 338 residues: Tagatose 1,6-diphosphate aldolase (338 aa).

The protein belongs to the aldolase LacD family.

The enzyme catalyses D-tagatofuranose 1,6-bisphosphate = D-glyceraldehyde 3-phosphate + dihydroxyacetone phosphate. It functions in the pathway carbohydrate metabolism; D-tagatose 6-phosphate degradation; D-glyceraldehyde 3-phosphate and glycerone phosphate from D-tagatose 6-phosphate: step 2/2. The sequence is that of Tagatose 1,6-diphosphate aldolase from Listeria monocytogenes serotype 4b (strain CLIP80459).